Consider the following 335-residue polypeptide: Casein kinase I (335 aa).

The 270-residue stretch at 9-278 (YRLGRKIGSG…LRRLFKDLFF (270 aa)) folds into the Protein kinase domain. Residues 15-23 (IGSGSFGDI) and K38 each bind ATP. The Proton acceptor role is filled by D128. The disordered stretch occupies residues 304 to 335 (RSMVNQGAESGNQWRRDASGRDPLGRLPQLEP). Over residues 305 to 316 (SMVNQGAESGNQ) the composition is skewed to polar residues. Residues 317–327 (WRRDASGRDPL) are compositionally biased toward basic and acidic residues.

This sequence belongs to the protein kinase superfamily. CK1 Ser/Thr protein kinase family. Casein kinase I subfamily.

It carries out the reaction L-seryl-[protein] + ATP = O-phospho-L-seryl-[protein] + ADP + H(+). The enzyme catalyses L-threonyl-[protein] + ATP = O-phospho-L-threonyl-[protein] + ADP + H(+). Its function is as follows. Casein kinases are operationally defined by their preferential utilization of acidic proteins such as caseins as substrates. It can phosphorylate a large number of proteins. The sequence is that of Casein kinase I from Eimeria tenella (Coccidian parasite).